Reading from the N-terminus, the 231-residue chain is UPF0758 protein YsxA (231 aa).

An MPN domain is found at valine 109–leucine 231. Residues histidine 180, histidine 182, and aspartate 193 each coordinate Zn(2+). A JAMM motif motif is present at residues histidine 180 to aspartate 193.

The protein belongs to the UPF0758 family.

This is UPF0758 protein YsxA (ysxA) from Bacillus subtilis (strain 168).